Consider the following 131-residue polypeptide: DNA-directed RNA polymerases I, II, and III subunit RPABC2 (131 aa).

Positions 1-24 (MDDADYDNDDVGGDDFDDVDEDVD) are disordered.

This sequence belongs to the archaeal Rpo6/eukaryotic RPB6 RNA polymerase subunit family. Component of the RNA polymerase I (Pol I), RNA polymerase II (Pol II) and RNA polymerase III (Pol III) complexes consisting of at least 13, 12 and 17 subunits, respectively.

It localises to the nucleus. In terms of biological role, DNA-dependent RNA polymerases catalyze the transcription of DNA into RNA using the four ribonucleoside triphosphates as substrates. Common component of RNA polymerases I, II and III which synthesize ribosomal RNA precursors, mRNA precursors and many functional non-coding RNAs, and small RNAs, such as 5S rRNA and tRNAs, respectively. Pol II is the central component of the basal RNA polymerase II transcription machinery. Pols are composed of mobile elements that move relative to each other. In Pol II, Polr2F/RPB6 is part of the clamp element and together with parts of Polr2A/RPB1 and RPB2 forms a pocket to which the Polr2D/RPB4-Polr2G/RPB7 subcomplex binds. This Drosophila melanogaster (Fruit fly) protein is DNA-directed RNA polymerases I, II, and III subunit RPABC2.